The following is a 103-amino-acid chain: Acyl carrier protein homolog (103 aa).

Positions 3–87 (ELTSEIKKEI…ETLEKVVQTT (85 aa)) constitute a Carrier domain. Ser45 is subject to O-(pantetheine 4'-phosphoryl)serine.

In terms of processing, 4'-phosphopantetheine is transferred from CoA to a specific serine of the apo-ACP-like protein.

Its subcellular location is the cytoplasm. In terms of biological role, acyl carrier protein. In Clostridium acetobutylicum (strain ATCC 824 / DSM 792 / JCM 1419 / IAM 19013 / LMG 5710 / NBRC 13948 / NRRL B-527 / VKM B-1787 / 2291 / W), this protein is Acyl carrier protein homolog.